Consider the following 210-residue polypeptide: Outer-membrane lipoprotein LolB (210 aa).

The N-terminal stretch at 1 to 18 (MKKFTKILSLSTLLFLAG) is a signal peptide. Cys-19 carries the N-palmitoyl cysteine lipid modification. A lipid anchor (S-diacylglycerol cysteine) is attached at Cys-19.

This sequence belongs to the LolB family. Monomer.

The protein localises to the cell outer membrane. In terms of biological role, plays a critical role in the incorporation of lipoproteins in the outer membrane after they are released by the LolA protein. The sequence is that of Outer-membrane lipoprotein LolB from Actinobacillus pleuropneumoniae serotype 5b (strain L20).